The following is a 501-amino-acid chain: Solute carrier family 2, facilitated glucose transporter member 5 (501 aa).

At Met-1 the chain carries N-acetylmethionine. Over 1-18 (MEPQDPVKREGRLTPVIV) the chain is Cytoplasmic. The helical transmembrane segment at 19–39 (LATLIAAFGSSFQYGYNVAAI) threads the bilayer. D-fructose is bound at residue Tyr-32. Topologically, residues 40–68 (NSPSEFMKDFYNYTYYDRVGEYMNEFYLT) are extracellular. N-linked (GlcNAc...) asparagine glycosylation occurs at Asn-51. Residues 69–91 (LLWSVTVSMFPFGGFLGSLMVGP) form a helical membrane-spanning segment. Residues 92–98 (LVNNLGR) lie on the Cytoplasmic side of the membrane. A helical membrane pass occupies residues 99 to 119 (KGTLLFNNIFSIVPALLMGFS). Topologically, residues 120–126 (ELAKSFE) are extracellular. The chain crosses the membrane as a helical span at residues 127–149 (MIIVARVLVGICAGLSSNVVPMY). The Cytoplasmic portion of the chain corresponds to 150-161 (LGELAPKNWRGA). Residues 162–182 (LGVVPQLFITIGILVAQIFGL) form a helical membrane-spanning segment. Gln-167 lines the D-fructose pocket. At 183-192 (RSLLANEEGW) the chain is on the extracellular side. A helical transmembrane segment spans residues 193–213 (PILLGLTGIPAVLQLLFLPFF). Residues 214 to 277 (PESPRYLLIQ…LFKMRSLRWQ (64 aa)) are Cytoplasmic-facing. Residues 278–298 (VISIIVLMAGQQLSGVNAIYY) form a helical membrane-spanning segment. Residues Gln-288 and 296–298 (IYY) contribute to the D-fructose site. Residues 299–313 (YADQIYLSAGVNEDD) lie on the Extracellular side of the membrane. Residues 314 to 334 (VQYVTAGTGAVNVLITVCAIF) traverse the membrane as a helical segment. Residues 335 to 342 (VVELMGRR) are Cytoplasmic-facing. The chain crosses the membrane as a helical span at residues 343 to 363 (FLLLLGFSVCFTACCVLTGAL). Residues 364–371 (ALQDVISW) are Extracellular-facing. The chain crosses the membrane as a helical span at residues 372 to 394 (MPYVSIACVISYVIGHALGPSPI). Residue His-387 coordinates D-fructose. Residues 395 to 412 (PALLVTEIFLQSSRPAAY) are Cytoplasmic-facing. Residues 413-433 (MVAGTVHWLSNFTVGLVFPFI) form a helical membrane-spanning segment. D-fructose is bound at residue 419–420 (HW). The Extracellular segment spans residues 434–439 (QVGLGA). Residues 440–460 (YSFVIFAVICLLTTVYIFLII) form a helical membrane-spanning segment. At 461–501 (PETKSKTFIEINRIFIKMNKVPGVHPEKEELKEFPPSTARQ) the chain is on the cytoplasmic side.

The protein belongs to the major facilitator superfamily. Sugar transporter (TC 2.A.1.1) family. Glucose transporter subfamily.

It localises to the apical cell membrane. The protein resides in the cell membrane. It is found in the sarcolemma. It carries out the reaction D-fructose(out) = D-fructose(in). Its function is as follows. Functions as a fructose transporter that has only low activity with other monosaccharides. Can mediate the uptake of deoxyglucose, but with low efficiency. Essential for fructose uptake in the small intestine. Plays a role in the regulation of salt uptake and blood pressure in response to dietary fructose. Required for the development of high blood pressure in response to high dietary fructose intake. This chain is Solute carrier family 2, facilitated glucose transporter member 5, found in Bos taurus (Bovine).